The chain runs to 407 residues: NAD(P)H-quinone oxidoreductase subunit 1 (407 aa).

A run of 9 helical transmembrane segments spans residues Trp-28–Val-48, Trp-96–Ile-116, Ile-127–Met-147, Leu-175–Val-195, Leu-203–Ile-223, Leu-267–Pro-287, Ala-309–Leu-329, Trp-347–Leu-367, and Thr-374–Leu-394.

Belongs to the complex I subunit 1 family. NDH-1 is composed of at least 11 different subunits.

It is found in the cell inner membrane. The enzyme catalyses a plastoquinone + NADH + (n+1) H(+)(in) = a plastoquinol + NAD(+) + n H(+)(out). The catalysed reaction is a plastoquinone + NADPH + (n+1) H(+)(in) = a plastoquinol + NADP(+) + n H(+)(out). Functionally, NDH-1 shuttles electrons from an unknown electron donor, via FMN and iron-sulfur (Fe-S) centers, to quinones in the respiratory and/or the photosynthetic chain. The immediate electron acceptor for the enzyme in this species is believed to be plastoquinone. Couples the redox reaction to proton translocation, and thus conserves the redox energy in a proton gradient. This Gloeobacter violaceus (strain ATCC 29082 / PCC 7421) protein is NAD(P)H-quinone oxidoreductase subunit 1.